The chain runs to 269 residues: 4-hydroxy-tetrahydrodipicolinate reductase (269 aa).

NAD(+) is bound by residues 8–13 (GVAGRM), 98–100 (GTT), and 122–125 (APNM). The Proton donor/acceptor role is filled by His-156. His-157 contributes to the (S)-2,3,4,5-tetrahydrodipicolinate binding site. Lys-160 serves as the catalytic Proton donor. 166–167 (GT) lines the (S)-2,3,4,5-tetrahydrodipicolinate pocket.

Belongs to the DapB family.

It localises to the cytoplasm. The catalysed reaction is (S)-2,3,4,5-tetrahydrodipicolinate + NAD(+) + H2O = (2S,4S)-4-hydroxy-2,3,4,5-tetrahydrodipicolinate + NADH + H(+). It carries out the reaction (S)-2,3,4,5-tetrahydrodipicolinate + NADP(+) + H2O = (2S,4S)-4-hydroxy-2,3,4,5-tetrahydrodipicolinate + NADPH + H(+). It participates in amino-acid biosynthesis; L-lysine biosynthesis via DAP pathway; (S)-tetrahydrodipicolinate from L-aspartate: step 4/4. Functionally, catalyzes the conversion of 4-hydroxy-tetrahydrodipicolinate (HTPA) to tetrahydrodipicolinate. In Chromohalobacter salexigens (strain ATCC BAA-138 / DSM 3043 / CIP 106854 / NCIMB 13768 / 1H11), this protein is 4-hydroxy-tetrahydrodipicolinate reductase.